The chain runs to 154 residues: Protein-export protein SecB (154 aa).

It belongs to the SecB family. In terms of assembly, homotetramer, a dimer of dimers. One homotetramer interacts with 1 SecA dimer.

Its subcellular location is the cytoplasm. Functionally, one of the proteins required for the normal export of preproteins out of the cell cytoplasm. It is a molecular chaperone that binds to a subset of precursor proteins, maintaining them in a translocation-competent state. It also specifically binds to its receptor SecA. The chain is Protein-export protein SecB from Blochmanniella pennsylvanica (strain BPEN).